The sequence spans 149 residues: Calmodulin (149 aa).

Alanine 2 carries the post-translational modification N-acetylalanine. EF-hand domains follow at residues 8–43, 44–79, 81–116, and 117–149; these read EQIAEFKEAFSLFDKDGDGTITTKELGTVMRSLGQN, PTEAELQDMINEVDADGNGTIDFPEFLTMMARKMKD, DSEEEIREAFRVFDKDGNGYISAAELRHVMTNLGEK, and LTDEEVDEMIREADIDGDGQVNYEEFVQIMTAK. Ca(2+) contacts are provided by aspartate 21, aspartate 23, aspartate 25, threonine 27, glutamate 32, aspartate 57, aspartate 59, asparagine 61, threonine 63, glutamate 68, aspartate 94, aspartate 96, asparagine 98, tyrosine 100, and glutamate 105. The residue at position 116 (lysine 116) is an N6,N6,N6-trimethyllysine. Ca(2+) contacts are provided by aspartate 130, aspartate 132, aspartate 134, glutamine 136, and glutamate 141.

Belongs to the calmodulin family.

Calmodulin acts as part of a calcium signal transduction pathway by mediating the control of a large number of enzymes, ion channels, aquaporins and other proteins through calcium-binding. Calcium-binding is required for the activation of calmodulin. Among the enzymes to be stimulated by the calmodulin-calcium complex are a number of protein kinases, such as myosin light-chain kinases and calmodulin-dependent protein kinase type II (CaMK2), and phosphatases. The chain is Calmodulin (calm) from Epinephelus akaara (Hong Kong grouper).